The chain runs to 242 residues: Biosynthetic peptidoglycan transglycosylase (242 aa).

Residues 19–39 (LMVVLAVFWGGGIALFSVAPV) form a helical membrane-spanning segment.

Belongs to the glycosyltransferase 51 family.

It is found in the cell inner membrane. The catalysed reaction is [GlcNAc-(1-&gt;4)-Mur2Ac(oyl-L-Ala-gamma-D-Glu-L-Lys-D-Ala-D-Ala)](n)-di-trans,octa-cis-undecaprenyl diphosphate + beta-D-GlcNAc-(1-&gt;4)-Mur2Ac(oyl-L-Ala-gamma-D-Glu-L-Lys-D-Ala-D-Ala)-di-trans,octa-cis-undecaprenyl diphosphate = [GlcNAc-(1-&gt;4)-Mur2Ac(oyl-L-Ala-gamma-D-Glu-L-Lys-D-Ala-D-Ala)](n+1)-di-trans,octa-cis-undecaprenyl diphosphate + di-trans,octa-cis-undecaprenyl diphosphate + H(+). Its pathway is cell wall biogenesis; peptidoglycan biosynthesis. In terms of biological role, peptidoglycan polymerase that catalyzes glycan chain elongation from lipid-linked precursors. This Escherichia coli O157:H7 protein is Biosynthetic peptidoglycan transglycosylase.